We begin with the raw amino-acid sequence, 218 residues long: Fucoxanthin-chlorophyll a-c binding protein, chloroplastic (218 aa).

Residues 1–36 (MFYSAAVAALMVGSASAFLAPAQFNSVAKSSGALSM) constitute a chloroplast transit peptide.

Belongs to the fucoxanthin chlorophyll protein family. As to quaternary structure, the LHC complex of chromophytic algae is composed of fucoxanthin, chlorophyll A and C bound non-covalently by fucoxanthin chlorophyll proteins (FCPs). The ratio of pigments in this LHC is; fucoxanthin: chlorophyll C: chlorophyll A; (0.6-1): (0.1-0.3): (1).

It is found in the plastid. Its subcellular location is the chloroplast thylakoid membrane. The light-harvesting complex (LHC) functions as a light receptor, it captures and delivers excitation energy to photosystems with which it is closely associated. Energy is transferred from the carotenoid and chlorophyll C (or B) to chlorophyll A and the photosynthetic reaction centers where it is used to synthesize ATP and reducing power. The sequence is that of Fucoxanthin-chlorophyll a-c binding protein, chloroplastic from Chattonella marina var. antiqua (Red tide flagellate).